A 465-amino-acid chain; its full sequence is Siroheme synthase (465 aa).

The segment at 1-203 (MDFLPLFHSL…GRPAEAERLL (203 aa)) is precorrin-2 dehydrogenase /sirohydrochlorin ferrochelatase. Residues 22–23 (EV) and 43–44 (PQ) contribute to the NAD(+) site. Ser-128 is subject to Phosphoserine. Residues 217 to 465 (GEVYLVGAGP…AWFEGAREGA (249 aa)) form a uroporphyrinogen-III C-methyltransferase region. Pro-226 provides a ligand contact to S-adenosyl-L-methionine. Asp-249 serves as the catalytic Proton acceptor. The Proton donor role is filled by Lys-271. Residues 302 to 304 (GGD), Ile-307, 332 to 333 (TA), Met-384, and Gly-413 each bind S-adenosyl-L-methionine.

This sequence in the N-terminal section; belongs to the precorrin-2 dehydrogenase / sirohydrochlorin ferrochelatase family. The protein in the C-terminal section; belongs to the precorrin methyltransferase family.

It catalyses the reaction uroporphyrinogen III + 2 S-adenosyl-L-methionine = precorrin-2 + 2 S-adenosyl-L-homocysteine + H(+). The enzyme catalyses precorrin-2 + NAD(+) = sirohydrochlorin + NADH + 2 H(+). The catalysed reaction is siroheme + 2 H(+) = sirohydrochlorin + Fe(2+). The protein operates within cofactor biosynthesis; adenosylcobalamin biosynthesis; precorrin-2 from uroporphyrinogen III: step 1/1. Its pathway is cofactor biosynthesis; adenosylcobalamin biosynthesis; sirohydrochlorin from precorrin-2: step 1/1. It participates in porphyrin-containing compound metabolism; siroheme biosynthesis; precorrin-2 from uroporphyrinogen III: step 1/1. It functions in the pathway porphyrin-containing compound metabolism; siroheme biosynthesis; siroheme from sirohydrochlorin: step 1/1. The protein operates within porphyrin-containing compound metabolism; siroheme biosynthesis; sirohydrochlorin from precorrin-2: step 1/1. Its function is as follows. Multifunctional enzyme that catalyzes the SAM-dependent methylations of uroporphyrinogen III at position C-2 and C-7 to form precorrin-2 via precorrin-1. Then it catalyzes the NAD-dependent ring dehydrogenation of precorrin-2 to yield sirohydrochlorin. Finally, it catalyzes the ferrochelation of sirohydrochlorin to yield siroheme. This chain is Siroheme synthase, found in Pseudomonas paraeruginosa (strain DSM 24068 / PA7) (Pseudomonas aeruginosa (strain PA7)).